Here is a 96-residue protein sequence, read N- to C-terminus: Large ribosomal subunit protein bL28 (96 aa).

This sequence belongs to the bacterial ribosomal protein bL28 family.

The protein is Large ribosomal subunit protein bL28 of Orientia tsutsugamushi (strain Boryong) (Rickettsia tsutsugamushi).